We begin with the raw amino-acid sequence, 475 residues long: Dihydrolipoyl dehydrogenase (475 aa).

FAD-binding positions include 36–45 (ERYNTLGGVC), K54, and G117. The cysteines at positions 45 and 50 are disulfide-linked. Residues 182-186 (GGGII), E205, V238, and 270-273 (AIGR) each bind NAD(+). D313 and A321 together coordinate FAD. H445 functions as the Proton acceptor in the catalytic mechanism.

This sequence belongs to the class-I pyridine nucleotide-disulfide oxidoreductase family. It depends on FAD as a cofactor.

The protein resides in the cytoplasm. The catalysed reaction is N(6)-[(R)-dihydrolipoyl]-L-lysyl-[protein] + NAD(+) = N(6)-[(R)-lipoyl]-L-lysyl-[protein] + NADH + H(+). The branched-chain alpha-keto dehydrogenase complex catalyzes the overall conversion of alpha-keto acids to acyl-CoA and CO(2). It contains multiple copies of 3 enzymatic components: branched-chain alpha-keto acid decarboxylase (E1), lipoamide acyltransferase (E2) and lipoamide dehydrogenase (E3). The protein is Dihydrolipoyl dehydrogenase (lpd) of Vibrio cholerae serotype O1 (strain ATCC 39315 / El Tor Inaba N16961).